A 505-amino-acid chain; its full sequence is RNA-splicing ligase RtcB homolog (505 aa).

Mn(2+) is bound by residues Asp119, Cys122, His227, His259, and His353. Asn226–Glu230 serves as a coordination point for GMP. Residues His353–Asn354, Gly402–Met405, Ser409, His428–Gly431, and Lys504 each bind GMP. Catalysis depends on His428, which acts as the GMP-histidine intermediate.

It belongs to the RtcB family. In terms of assembly, catalytic component of the tRNA-splicing ligase complex. Requires Mn(2+) as cofactor.

It localises to the nucleus. The protein resides in the cytoplasm. It carries out the reaction a 3'-end 3'-phospho-ribonucleotide-RNA + a 5'-end dephospho-ribonucleoside-RNA + GTP = a ribonucleotidyl-ribonucleotide-RNA + GMP + diphosphate. It catalyses the reaction a 3'-end 2',3'-cyclophospho-ribonucleotide-RNA + a 5'-end dephospho-ribonucleoside-RNA + GTP + H2O = a ribonucleotidyl-ribonucleotide-RNA + GMP + diphosphate + H(+). Catalytic subunit of the tRNA-splicing ligase complex that acts by directly joining spliced tRNA halves to mature-sized tRNAs by incorporating the precursor-derived splice junction phosphate into the mature tRNA as a canonical 3',5'-phosphodiester. May act as an RNA ligase with broad substrate specificity, and may function toward other RNAs. In Danio rerio (Zebrafish), this protein is RNA-splicing ligase RtcB homolog.